The primary structure comprises 551 residues: Medium/long-chain-fatty-acid--CoA/3-oxocholest-4-en-26-oate--CoA ligase (551 aa).

ATP contacts are provided by residues 172–180 (TGGTTGFPK), Asp-417, Arg-432, and Lys-523.

Belongs to the ATP-dependent AMP-binding enzyme family.

It carries out the reaction a medium-chain fatty acid + ATP + CoA = a medium-chain fatty acyl-CoA + AMP + diphosphate. The catalysed reaction is a long-chain fatty acid + ATP + CoA = a long-chain fatty acyl-CoA + AMP + diphosphate. The enzyme catalyses (25S)-3-oxocholest-4-en-26-oate + ATP + CoA = (25S)-3-oxocholest-4-en-26-oyl-CoA + AMP + diphosphate. The protein operates within lipid metabolism; fatty acid biosynthesis. It participates in steroid metabolism; cholesterol metabolism. Plays an essential role in degradation of the side chains of C-24 branched-chain sterols. Not essential for degradation of straight chain sterols such as cholesterol. Catalyzes the activation of medium/long-chain fatty acids as acyl-coenzyme A (acyl-CoA), which are then transferred to the multifunctional polyketide synthase (PKS) type III for further chain extension. May be involved in the degradation of cholesterol via the degradation of the side chains of C-24 branched-chain sterols. The protein is Medium/long-chain-fatty-acid--CoA/3-oxocholest-4-en-26-oate--CoA ligase of Mycolicibacterium smegmatis (strain ATCC 700084 / mc(2)155) (Mycobacterium smegmatis).